The following is a 199-amino-acid chain: Probable GTP-binding protein EngB (199 aa).

Residues 21–195 (IYTEIAFLGR…EQKIILESLG (175 aa)) enclose the EngB-type G domain. GTP contacts are provided by residues 29 to 36 (GRSNVGKS), 56 to 60 (GKTQL), 81 to 84 (DLPG), 151 to 154 (TKAD), and 174 to 176 (VSN). S36 and T58 together coordinate Mg(2+).

Belongs to the TRAFAC class TrmE-Era-EngA-EngB-Septin-like GTPase superfamily. EngB GTPase family. The cofactor is Mg(2+).

In terms of biological role, necessary for normal cell division and for the maintenance of normal septation. This is Probable GTP-binding protein EngB from Campylobacter lari (strain RM2100 / D67 / ATCC BAA-1060).